The chain runs to 363 residues: Fructose-bisphosphate aldolase C (363 aa).

Substrate contacts are provided by Arg-56 and Lys-147. Catalysis depends on Lys-230, which acts as the Schiff-base intermediate with dihydroxyacetone-P.

The protein belongs to the class I fructose-bisphosphate aldolase family. As to quaternary structure, homotetramer. Expressed in brain but not in liver or muscle.

It carries out the reaction beta-D-fructose 1,6-bisphosphate = D-glyceraldehyde 3-phosphate + dihydroxyacetone phosphate. It participates in carbohydrate degradation; glycolysis; D-glyceraldehyde 3-phosphate and glycerone phosphate from D-glucose: step 4/4. This chain is Fructose-bisphosphate aldolase C (aldoc), found in Carassius auratus (Goldfish).